Reading from the N-terminus, the 119-residue chain is Putative mating-type protein A2 (119 aa).

Residues 38–100 (KPYRGHRFTK…NRRRKEKTIT (63 aa)) constitute a DNA-binding region (homeobox; TALE-type).

The protein belongs to the TALE/M-ATYP homeobox family.

Its subcellular location is the nucleus. In terms of biological role, probably not a functional protein. Cells lacking A2 show no obvious alterations in mating, sporulation and cell growth. In Saccharomyces cerevisiae (Baker's yeast), this protein is Putative mating-type protein A2 (MATA2).